The primary structure comprises 89 residues: Small ribosomal subunit protein uS15 (89 aa).

Belongs to the universal ribosomal protein uS15 family. Part of the 30S ribosomal subunit. Forms a bridge to the 50S subunit in the 70S ribosome, contacting the 23S rRNA.

Functionally, one of the primary rRNA binding proteins, it binds directly to 16S rRNA where it helps nucleate assembly of the platform of the 30S subunit by binding and bridging several RNA helices of the 16S rRNA. Forms an intersubunit bridge (bridge B4) with the 23S rRNA of the 50S subunit in the ribosome. The protein is Small ribosomal subunit protein uS15 of Rhodospirillum centenum (strain ATCC 51521 / SW).